The sequence spans 229 residues: tRNA (guanine-N(7)-)-methyltransferase (229 aa).

S-adenosyl-L-methionine is bound by residues glutamate 59, glutamate 84, aspartate 111, and aspartate 134. Residue aspartate 134 is part of the active site. Residue lysine 138 participates in substrate binding. An interaction with RNA region spans residues 140–145 (KHNKRR). Substrate is bound by residues aspartate 170 and 207-210 (TKFE).

Belongs to the class I-like SAM-binding methyltransferase superfamily. TrmB family.

The enzyme catalyses guanosine(46) in tRNA + S-adenosyl-L-methionine = N(7)-methylguanosine(46) in tRNA + S-adenosyl-L-homocysteine. The protein operates within tRNA modification; N(7)-methylguanine-tRNA biosynthesis. Functionally, catalyzes the formation of N(7)-methylguanine at position 46 (m7G46) in tRNA. In Saccharophagus degradans (strain 2-40 / ATCC 43961 / DSM 17024), this protein is tRNA (guanine-N(7)-)-methyltransferase.